A 245-amino-acid chain; its full sequence is Type II restriction enzyme MjaIV (245 aa).

It carries out the reaction Endonucleolytic cleavage of DNA to give specific double-stranded fragments with terminal 5'-phosphates.. A P subtype restriction enzyme that recognizes the double-stranded sequence 5'-GTNNAC-3'; the cleavage site is unknown. This Methanocaldococcus jannaschii (strain ATCC 43067 / DSM 2661 / JAL-1 / JCM 10045 / NBRC 100440) (Methanococcus jannaschii) protein is Type II restriction enzyme MjaIV (mjaIVR).